A 198-amino-acid chain; its full sequence is Recombination protein RecR (198 aa).

A C4-type zinc finger spans residues 57-72 (CLNCGCLTDEAACYFC). Residues 80–175 (QIICVTAFPR…QISRLAFGLP (96 aa)) form the Toprim domain.

Belongs to the RecR family.

Functionally, may play a role in DNA repair. It seems to be involved in an RecBC-independent recombinational process of DNA repair. It may act with RecF and RecO. This is Recombination protein RecR from Protochlamydia amoebophila (strain UWE25).